The chain runs to 188 residues: Peptidyl-tRNA hydrolase (188 aa).

F15 is a binding site for tRNA. H20 serves as the catalytic Proton acceptor. Residues Y64, N66, and N112 each contribute to the tRNA site.

This sequence belongs to the PTH family. As to quaternary structure, monomer.

The protein resides in the cytoplasm. The enzyme catalyses an N-acyl-L-alpha-aminoacyl-tRNA + H2O = an N-acyl-L-amino acid + a tRNA + H(+). Its function is as follows. Hydrolyzes ribosome-free peptidyl-tRNAs (with 1 or more amino acids incorporated), which drop off the ribosome during protein synthesis, or as a result of ribosome stalling. In terms of biological role, catalyzes the release of premature peptidyl moieties from peptidyl-tRNA molecules trapped in stalled 50S ribosomal subunits, and thus maintains levels of free tRNAs and 50S ribosomes. The protein is Peptidyl-tRNA hydrolase of Borrelia turicatae (strain 91E135).